The sequence spans 1050 residues: Diacylglycerol kinase iota (1050 aa).

Disordered stretches follow at residues 52-73 (NPSSSAGEERGATGGSSSSGSG) and 325-356 (PQNSLKASNRKKKRTSFKRKASKRGTEQENKG). Over residues 332–347 (SNRKKKRTSFKRKASK) the composition is skewed to basic residues. A DAGKc domain is found at 367-502 (PLMKPLLVFV…DRWNLHVERN (136 aa)). ANK repeat units follow at residues 943-972 (GHCSLLHYAAKTGNGEIVKYILDHGPAELL) and 979-1008 (TGETALHKAACQRNRAVCQLLVDAGASLRQ). Residues 1048–1050 (TAV) carry the PDZ-binding motif.

The protein belongs to the eukaryotic diacylglycerol kinase family. As to quaternary structure, interacts (via PDZ-binding motif) with DLG4; controls the localization of DGKI to the synapse. Interacts (via PDZ-binding motif) with DLG1. Interacts (via PDZ-binding motif) with DLG2. Interacts (via PDZ-binding motif) with DLG3. May interact with RASGRP3; involved in the regulation of RASGRP3 activity. In terms of tissue distribution, specifically expressed in brain (at protein level). Expressed in hippocampus, cerebellum, brain stem and spinal cord (at protein level). Highly expressed in hippocampus, cerebellar cortex, olfactory bulb, and olfactory tubercle and to lower extent in the cerebral cortex, caudate putamen, and thalamus. Not detected in the white matter. Also expressed in eye. Major isoform in brain (at protein level). As to expression, minor isoform in brain (at protein level). In terms of tissue distribution, expressed in brain (at protein level).

The protein localises to the cell projection. The protein resides in the axon. It is found in the dendrite. Its subcellular location is the presynapse. It localises to the postsynapse. The protein localises to the postsynaptic density. The protein resides in the synaptic cell membrane. It is found in the cytoplasmic vesicle. Its subcellular location is the secretory vesicle. It localises to the synaptic vesicle membrane. The protein localises to the cytoplasm. The protein resides in the cytosol. It is found in the nucleus. The catalysed reaction is a 1,2-diacyl-sn-glycerol + ATP = a 1,2-diacyl-sn-glycero-3-phosphate + ADP + H(+). It catalyses the reaction 1,2-di-(9Z-octadecenoyl)-sn-glycerol + ATP = 1,2-di-(9Z-octadecenoyl)-sn-glycero-3-phosphate + ADP + H(+). It carries out the reaction 1-octadecanoyl-2-(9Z,12Z)-octadecadienoyl-sn-glycerol + ATP = 1-octadecanoyl-2-(9Z,12Z-octadecadienoyl)-sn-glycero-3-phosphate + ADP + H(+). The enzyme catalyses 1-octadecanoyl-2-(5Z,8Z,11Z,14Z-eicosatetraenoyl)-sn-glycerol + ATP = 1-octadecanoyl-2-(5Z,8Z,11Z,14Z-eicosatetraenoyl)-sn-glycero-3-phosphate + ADP + H(+). Its pathway is lipid metabolism; glycerolipid metabolism. Activated by phosphatidylserine. Functionally, diacylglycerol kinase that converts diacylglycerol/DAG into phosphatidic acid/phosphatidate/PA and regulates the respective levels of these two bioactive lipids. Thereby, acts as a central switch between the signaling pathways activated by these second messengers with different cellular targets and opposite effects in numerous biological processes. Has probably no preference for any of the diacylglycerols in terms of the acyl chain composition, especially for the acyl chain at the sn-2 position. By controlling the diacylglycerol/DAG-mediated activation of RASGRP3, negatively regulates the Rap1 signaling pathway. May play a role in presynaptic diacylglycerol/DAG signaling and control neurotransmitter release during metabotropic glutamate receptor-dependent long-term depression. In terms of biological role, has a decreased affinity for ATP and a reduced diacylglycerol kinase activity. Has no preference for any of the diacylglycerols in terms of the acyl chain composition. Its function is as follows. Has no diacylglycerol kinase activity. In Rattus norvegicus (Rat), this protein is Diacylglycerol kinase iota.